The primary structure comprises 511 residues: Glycerol kinase (511 aa).

Threonine 11 contributes to the ADP binding site. The ATP site is built by threonine 11, serine 12, and serine 13. Residue threonine 11 participates in sn-glycerol 3-phosphate binding. Arginine 15 provides a ligand contact to ADP. Sn-glycerol 3-phosphate-binding residues include arginine 81, glutamate 82, tyrosine 133, and aspartate 242. Glycerol-binding residues include arginine 81, glutamate 82, tyrosine 133, aspartate 242, and glutamine 243. 2 residues coordinate ADP: threonine 264 and glycine 321. ATP is bound by residues threonine 264, glycine 321, glutamine 325, and glycine 426. ADP is bound by residues glycine 426 and asparagine 430.

This sequence belongs to the FGGY kinase family.

It catalyses the reaction glycerol + ATP = sn-glycerol 3-phosphate + ADP + H(+). It functions in the pathway polyol metabolism; glycerol degradation via glycerol kinase pathway; sn-glycerol 3-phosphate from glycerol: step 1/1. Its activity is regulated as follows. Inhibited by fructose 1,6-bisphosphate (FBP). In terms of biological role, key enzyme in the regulation of glycerol uptake and metabolism. Catalyzes the phosphorylation of glycerol to yield sn-glycerol 3-phosphate. This Verminephrobacter eiseniae (strain EF01-2) protein is Glycerol kinase.